The chain runs to 430 residues: Adenylosuccinate synthetase (430 aa).

GTP is bound by residues 12–18 (GDEGKGK) and 40–42 (GHT). Residue Asp13 is the Proton acceptor of the active site. The Mg(2+) site is built by Asp13 and Gly40. IMP-binding positions include 13–16 (DEGK), 38–41 (NAGH), Thr130, Arg144, Gln224, Thr239, and Arg303. His41 (proton donor) is an active-site residue. Residue 299–305 (TVTGRKR) coordinates substrate. Residues Arg305, 331–333 (KLD), and 413–415 (STS) contribute to the GTP site.

The protein belongs to the adenylosuccinate synthetase family. As to quaternary structure, homodimer. Mg(2+) is required as a cofactor.

It localises to the cytoplasm. It carries out the reaction IMP + L-aspartate + GTP = N(6)-(1,2-dicarboxyethyl)-AMP + GDP + phosphate + 2 H(+). It functions in the pathway purine metabolism; AMP biosynthesis via de novo pathway; AMP from IMP: step 1/2. Functionally, plays an important role in the de novo pathway of purine nucleotide biosynthesis. Catalyzes the first committed step in the biosynthesis of AMP from IMP. This chain is Adenylosuccinate synthetase, found in Paracoccus denitrificans (strain Pd 1222).